Here is a 282-residue protein sequence, read N- to C-terminus: 5'-adenylylsulfate reductase-like 2 (282 aa).

Residues 1–19 (MRWWPALPLLLLAVAVAGA) form the signal peptide. Residues 20–159 (GDAAPVCTRP…LAAFYNDVSG (140 aa)) form the Thioredoxin domain. The N-linked (GlcNAc...) asparagine glycan is linked to Asn134. A helical transmembrane segment spans residues 205 to 225 (AASFVILRLLYLFYPKITAFV).

The protein resides in the membrane. The chain is 5'-adenylylsulfate reductase-like 2 (APRL2) from Oryza sativa subsp. japonica (Rice).